A 248-amino-acid chain; its full sequence is Serine/arginine-rich splicing factor 1 (248 aa).

At serine 2 the chain carries N-acetylserine. Position 2 is a phosphoserine (serine 2). Residues 16–91 enclose the RRM 1 domain; that stretch reads CRIYVGNLPP…YRLRVEFPRS (76 aa). A Glycyl lysine isopeptide (Lys-Gly) (interchain with G-Cter in SUMO2) cross-link involves residue lysine 30. N6-acetyllysine; alternate is present on lysine 38. Lysine 38 participates in a covalent cross-link: Glycyl lysine isopeptide (Lys-Gly) (interchain with G-Cter in SUMO2); alternate. The interval 88–134 is disordered; the sequence is FPRSGRGTGRGGGGGGGGGAPRGRYGPPSRRSENRVVVSGLPPSGSW. Asymmetric dimethylarginine; alternate occurs at positions 93, 97, and 109. An omega-N-methylarginine; alternate mark is found at arginine 93, arginine 97, and arginine 109. The span at 93–108 shows a compositional bias: gly residues; sequence RGTGRGGGGGGGGGAP. Arginine 111 is subject to Omega-N-methylarginine. The RRM 2 domain occupies 121 to 195; it reads NRVVVSGLPP…ETAYIRVKVD (75 aa). Serine 133 bears the Phosphoserine mark. An N6-acetyllysine modification is found at lysine 179. Residues 191–248 form a disordered region; it reads RVKVDGPRSPSYGRSRSRSRSRSRSRSRSNSRSRSYSPRRSRGSPRYSPRHSRSRSRT. An interaction with SAFB1 region spans residues 198–247; sequence RSPSYGRSRSRSRSRSRSRSRSNSRSRSYSPRRSRGSPRYSPRHSRSRSR. Phosphoserine is present on residues serine 199 and serine 201. At tyrosine 202 the chain carries Phosphotyrosine. Phosphoserine is present on residues serine 205, serine 207, serine 209, serine 231, serine 234, and serine 238. A compositionally biased stretch (basic residues) spans 205–248; the sequence is SRSRSRSRSRSRSRSNSRSRSYSPRRSRGSPRYSPRHSRSRSRT.

It belongs to the splicing factor SR family. Consists of two polypeptides of p32 and p33. Identified in the spliceosome C complex. Component of a ribonucleoprotein complex containing mRNAs and RNA-binding proteins including DDX5, HNRNPH2 and SRSF1 as well as splicing regulator ARVCF. In vitro, self-associates and binds SRSF2, SNRNP70 and U2AF1 but not U2AF2. Binds SREK1/SFRS12. Interacts with SAFB/SAFB1. Interacts with PSIP1/LEDGF. Interacts with RSRC1 (via Arg/Ser-rich domain). Interacts with ZRSR2/U2AF1-RS2. Interacts with CCDC55 (via C-terminus). Interacts with SRPK1 and a sliding docking interaction is essential for its sequential and processive phosphorylation by SRPK1. Interacts with NXF1. Interacts with CCNL1, CCNL2 and CDK11B. Interacts with RRP1B. Interacts (when phosphorylated in its RS domain) with TNPO3; promoting nuclear import. Interacts with ILDR1 (via C-terminus) and ILDR2. In terms of processing, phosphorylated by CLK1, CLK2, CLK3 and CLK4. Phosphorylated by SRPK1 at multiple serines in its RS domain via a directional (C-terminal to N-terminal) and a dual-track mechanism incorporating both processive phosphorylation (in which the kinase stays attached to the substrate after each round of phosphorylation) and distributive phosphorylation steps (in which the kinase and substrate dissociate after each phosphorylation event). The RS domain of SRSF1 binds to a docking groove in the large lobe of the kinase domain of SRPK1 and this induces certain structural changes in SRPK1 and/or RRM 2 domain of SRSF1, allowing RRM 2 to bind the kinase and initiate phosphorylation. The cycles continue for several phosphorylation steps in a processive manner (steps 1-8) until the last few phosphorylation steps (approximately steps 9-12). During that time, a mechanical stress induces the unfolding of the beta-4 motif in RRM 2, which then docks at the docking groove of SRPK1. This also signals RRM 2 to begin to dissociate, which facilitates SRSF1 dissociation after phosphorylation is completed. Asymmetrically dimethylated at arginines, probably by PRMT1, methylation promotes localization to nuclear speckles.

It is found in the cytoplasm. It localises to the nucleus speckle. Functionally, plays a role in preventing exon skipping, ensuring the accuracy of splicing and regulating alternative splicing. Interacts with other spliceosomal components, via the RS domains, to form a bridge between the 5'- and 3'-splice site binding components, U1 snRNP and U2AF. Can stimulate binding of U1 snRNP to a 5'-splice site-containing pre-mRNA. Binds to purine-rich RNA sequences, either the octamer, 5'-RGAAGAAC-3' (r=A or G) or the decamers, AGGACAGAGC/AGGACGAAGC. Binds preferentially to the 5'-CGAGGCG-3' motif in vitro. Three copies of the octamer constitute a powerful splicing enhancer in vitro, the ASF/SF2 splicing enhancer (ASE) which can specifically activate ASE-dependent splicing. May function as export adapter involved in mRNA nuclear export through the TAP/NXF1 pathway. This chain is Serine/arginine-rich splicing factor 1 (SRSF1), found in Bos taurus (Bovine).